The chain runs to 133 residues: S-adenosylmethionine decarboxylase proenzyme (133 aa).

The Schiff-base intermediate with substrate; via pyruvic acid role is filled by Ser-63. Ser-63 is subject to Pyruvic acid (Ser); by autocatalysis. The active-site Proton acceptor; for processing activity is the His-68. The active-site Proton donor; for catalytic activity is Cys-83.

This sequence belongs to the prokaryotic AdoMetDC family. Type 1 subfamily. Heterotetramer of two alpha and two beta chains arranged as a dimer of alpha/beta heterodimers. The cofactor is pyruvate. Is synthesized initially as an inactive proenzyme. Formation of the active enzyme involves a self-maturation process in which the active site pyruvoyl group is generated from an internal serine residue via an autocatalytic post-translational modification. Two non-identical subunits are generated from the proenzyme in this reaction, and the pyruvate is formed at the N-terminus of the alpha chain, which is derived from the carboxyl end of the proenzyme. The post-translation cleavage follows an unusual pathway, termed non-hydrolytic serinolysis, in which the side chain hydroxyl group of the serine supplies its oxygen atom to form the C-terminus of the beta chain, while the remainder of the serine residue undergoes an oxidative deamination to produce ammonia and the pyruvoyl group blocking the N-terminus of the alpha chain.

The enzyme catalyses S-adenosyl-L-methionine + H(+) = S-adenosyl 3-(methylsulfanyl)propylamine + CO2. The protein operates within amine and polyamine biosynthesis; S-adenosylmethioninamine biosynthesis; S-adenosylmethioninamine from S-adenosyl-L-methionine: step 1/1. Functionally, catalyzes the decarboxylation of S-adenosylmethionine to S-adenosylmethioninamine (dcAdoMet), the propylamine donor required for the synthesis of the polyamines spermine and spermidine from the diamine putrescine. The chain is S-adenosylmethionine decarboxylase proenzyme from Acidithiobacillus ferrooxidans (strain ATCC 23270 / DSM 14882 / CIP 104768 / NCIMB 8455) (Ferrobacillus ferrooxidans (strain ATCC 23270)).